A 330-amino-acid polypeptide reads, in one-letter code: Phospho-N-acetylmuramoyl-pentapeptide-transferase (330 aa).

The next 9 membrane-spanning stretches (helical) occupy residues 13–33, 58–78, 83–103, 113–133, 152–172, 179–199, 209–229, 231–250, and 304–324; these read VFVFILSFAFSLILGPVLIPM, PTMGGMIFLIPVTVLAAFYAG, ILPLIFVTLGFGLIGFIDDFI, LYWNQKMFGLLLVAVTFAVYL, VSLGWLFVPFVVLVLIASTNA, LDGLAAGVTLIVTVFFTIVAM, MFSAMVAGGCLGFLTFNAYPA, IFMGDTGSLALGGAVGAIAI, and VKVVLVFWTITVLLCILGFFA.

The protein belongs to the glycosyltransferase 4 family. MraY subfamily. Mg(2+) is required as a cofactor.

The protein localises to the cell membrane. The enzyme catalyses UDP-N-acetyl-alpha-D-muramoyl-L-alanyl-gamma-D-glutamyl-meso-2,6-diaminopimeloyl-D-alanyl-D-alanine + di-trans,octa-cis-undecaprenyl phosphate = di-trans,octa-cis-undecaprenyl diphospho-N-acetyl-alpha-D-muramoyl-L-alanyl-D-glutamyl-meso-2,6-diaminopimeloyl-D-alanyl-D-alanine + UMP. Its pathway is cell wall biogenesis; peptidoglycan biosynthesis. In terms of biological role, catalyzes the initial step of the lipid cycle reactions in the biosynthesis of the cell wall peptidoglycan: transfers peptidoglycan precursor phospho-MurNAc-pentapeptide from UDP-MurNAc-pentapeptide onto the lipid carrier undecaprenyl phosphate, yielding undecaprenyl-pyrophosphoryl-MurNAc-pentapeptide, known as lipid I. The protein is Phospho-N-acetylmuramoyl-pentapeptide-transferase of Acetivibrio thermocellus (strain ATCC 27405 / DSM 1237 / JCM 9322 / NBRC 103400 / NCIMB 10682 / NRRL B-4536 / VPI 7372) (Clostridium thermocellum).